We begin with the raw amino-acid sequence, 177 residues long: Putative adenylate kinase (177 aa).

ATP contacts are provided by Gly-10, Gly-12, Lys-13, Thr-14, and Thr-15. An NMP region spans residues 30–53; it reads DITEAVKKYKLYTEKDEDMDSYVI. The interval 103–113 is LID; it reads KRGYKPKKVLE. Residue Arg-104 coordinates ATP.

The protein belongs to the adenylate kinase family. AK6 subfamily. Interacts with uS11. Not a structural component of 40S pre-ribosomes, but transiently interacts with them by binding to uS11.

It catalyses the reaction AMP + ATP = 2 ADP. The catalysed reaction is ATP + H2O = ADP + phosphate + H(+). Its function is as follows. Broad-specificity nucleoside monophosphate (NMP) kinase that catalyzes the reversible transfer of the terminal phosphate group between nucleoside triphosphates and monophosphates. Also has ATPase activity. Involved in the late maturation steps of the 30S ribosomal particles, specifically 16S rRNA maturation. While NMP activity is not required for ribosome maturation, ATPase activity is. Associates transiently with small ribosomal subunit protein uS11. ATP hydrolysis breaks the interaction with uS11. May temporarily remove uS11 from the ribosome to enable a conformational change of the ribosomal RNA that is needed for the final maturation step of the small ribosomal subunit. The polypeptide is Putative adenylate kinase (Methanocaldococcus jannaschii (strain ATCC 43067 / DSM 2661 / JAL-1 / JCM 10045 / NBRC 100440) (Methanococcus jannaschii)).